We begin with the raw amino-acid sequence, 290 residues long: UPF0507 protein YML003W (290 aa).

Belongs to the UPF0507 family.

The chain is UPF0507 protein YML003W from Saccharomyces cerevisiae (strain ATCC 204508 / S288c) (Baker's yeast).